The following is a 119-amino-acid chain: Large ribosomal subunit protein bL19 (119 aa).

This sequence belongs to the bacterial ribosomal protein bL19 family.

In terms of biological role, this protein is located at the 30S-50S ribosomal subunit interface and may play a role in the structure and function of the aminoacyl-tRNA binding site. The polypeptide is Large ribosomal subunit protein bL19 (Photobacterium profundum (strain SS9)).